The following is a 303-amino-acid chain: Acetylglutamate kinase (303 aa).

Substrate-binding positions include 67–68 (GG), Arg-89, and Asn-193.

Belongs to the acetylglutamate kinase family. ArgB subfamily.

The protein localises to the cytoplasm. It catalyses the reaction N-acetyl-L-glutamate + ATP = N-acetyl-L-glutamyl 5-phosphate + ADP. It functions in the pathway amino-acid biosynthesis; L-arginine biosynthesis; N(2)-acetyl-L-ornithine from L-glutamate: step 2/4. Its function is as follows. Catalyzes the ATP-dependent phosphorylation of N-acetyl-L-glutamate. This Acinetobacter baylyi (strain ATCC 33305 / BD413 / ADP1) protein is Acetylglutamate kinase.